Reading from the N-terminus, the 371-residue chain is Queuine tRNA-ribosyltransferase (371 aa).

Asp-90 functions as the Proton acceptor in the catalytic mechanism. Substrate-binding positions include 90-94 (DSGGF), Asp-144, Gln-189, and Gly-215. The tract at residues 246-252 (GVGTPEN) is RNA binding. Asp-265 serves as the catalytic Nucleophile. Residues 270–274 (TRNAR) form an RNA binding; important for wobble base 34 recognition region. Residues Cys-303, Cys-305, Cys-308, and His-334 each contribute to the Zn(2+) site.

The protein belongs to the queuine tRNA-ribosyltransferase family. As to quaternary structure, homodimer. Within each dimer, one monomer is responsible for RNA recognition and catalysis, while the other monomer binds to the replacement base PreQ1. Zn(2+) is required as a cofactor.

It catalyses the reaction 7-aminomethyl-7-carbaguanine + guanosine(34) in tRNA = 7-aminomethyl-7-carbaguanosine(34) in tRNA + guanine. The protein operates within tRNA modification; tRNA-queuosine biosynthesis. In terms of biological role, catalyzes the base-exchange of a guanine (G) residue with the queuine precursor 7-aminomethyl-7-deazaguanine (PreQ1) at position 34 (anticodon wobble position) in tRNAs with GU(N) anticodons (tRNA-Asp, -Asn, -His and -Tyr). Catalysis occurs through a double-displacement mechanism. The nucleophile active site attacks the C1' of nucleotide 34 to detach the guanine base from the RNA, forming a covalent enzyme-RNA intermediate. The proton acceptor active site deprotonates the incoming PreQ1, allowing a nucleophilic attack on the C1' of the ribose to form the product. After dissociation, two additional enzymatic reactions on the tRNA convert PreQ1 to queuine (Q), resulting in the hypermodified nucleoside queuosine (7-(((4,5-cis-dihydroxy-2-cyclopenten-1-yl)amino)methyl)-7-deazaguanosine). This is Queuine tRNA-ribosyltransferase from Helicobacter pylori (strain J99 / ATCC 700824) (Campylobacter pylori J99).